A 778-amino-acid polypeptide reads, in one-letter code: Protein translocase subunit SecA 2 (778 aa).

ATP-binding positions include Q94, 112–116, and D501; that span reads GEGKT.

The protein belongs to the SecA family. In terms of assembly, monomer and homodimer. Part of the essential Sec protein translocation apparatus which comprises SecA, SecYEG and auxiliary proteins SecDF. Other proteins may also be involved.

It localises to the cell membrane. The protein resides in the cytoplasm. The enzyme catalyses ATP + H2O + cellular proteinSide 1 = ADP + phosphate + cellular proteinSide 2.. Its function is as follows. Part of the Sec protein translocase complex. Interacts with the SecYEG preprotein conducting channel. Has a central role in coupling the hydrolysis of ATP to the transfer of proteins into and across the cell membrane, serving as an ATP-driven molecular motor driving the stepwise translocation of polypeptide chains across the membrane. The polypeptide is Protein translocase subunit SecA 2 (Mycobacterium leprae (strain TN)).